A 462-amino-acid chain; its full sequence is Glycerol-3-phosphate acyltransferase ATS12, chloroplastic (462 aa).

Residues 1 to 82 (MFILSSSSST…DKESAQSAAT (82 aa)) constitute a chloroplast transit peptide. The HXXXXD motif signature appears at 233-238 (HQTEAD).

The protein belongs to the GPAT/DAPAT family.

It is found in the plastid. It localises to the chloroplast stroma. The catalysed reaction is a fatty acyl-[ACP] + sn-glycerol 3-phosphate = a 1-acyl-sn-glycero-3-phosphate + holo-[ACP]. It carries out the reaction sn-glycerol 3-phosphate + an acyl-CoA = a 1-acyl-sn-glycero-3-phosphate + CoA. The protein operates within phospholipid metabolism; CDP-diacylglycerol biosynthesis; CDP-diacylglycerol from sn-glycerol 3-phosphate: step 1/3. Esterifies the acyl-group from acyl-acyl carrier proteins (acyl-ACPs) to the sn-1 position of glycerol-3-phosphate. The physiological acyl donors in chloroplasts are acyl-ACPs, but acyl-CoAs are used as artificial donor for in vitro reactions. The enzyme from chilling-resistant plants discriminates against non-fluid palmitic acid and selects oleic acid whereas the enzyme from sensitive plants accepts both fatty acids. Squash is chilling-sensitive. Does not seem to discriminate between the acyl-ACP thioesters 18:1-ACP, 18:0-ACP and 16:0-ACP. Exhibits higher selectivity for 16:0-CoA than 18:1-CoA in vitro. The chain is Glycerol-3-phosphate acyltransferase ATS12, chloroplastic from Cucurbita moschata (Winter crookneck squash).